A 512-amino-acid chain; its full sequence is Metal transporter Nramp4 (512 aa).

Helical transmembrane passes span 52 to 72, 80 to 100, 129 to 149, 161 to 181, 189 to 209, 235 to 255, 277 to 297, 323 to 343, 371 to 391, 402 to 422, 440 to 460, and 468 to 488; these read LWLF…PGNL, AIAG…GLLI, MVLW…EVIG, LVPL…FLFL, LEAV…WMFG, AVGI…SALV, IEST…TTVF, YGGG…AAGQ, ALIT…VFDS, WLNV…LCLV, ISWI…VDFF, and ILLV…LYLI.

It belongs to the NRAMP (TC 2.A.55) family. As to expression, expressed in vascular tissues.

The protein resides in the vacuole membrane. Vacuolar metal transporter involved in intracellular metal homeostasis. Can transport iron (Fe), manganese (Mn) and cadmium (Cd). Regulates metal accumulation under Fe starvation. Acts redundantly with NRAMP3 to mobilize vacuolar Fe and provide sufficient Fe during seed germination. In association with NRAMP3, required for optimal growth and photosynthesis under Mn deficiency. Exports Mn from vacuoles in leaf mesophyll cells, making Mn available for functional photosystem II in chloroplasts. This is Metal transporter Nramp4 (NRAMP4) from Arabidopsis thaliana (Mouse-ear cress).